Here is a 234-residue protein sequence, read N- to C-terminus: DEAD-box ATP-dependent RNA helicase 3 (234 aa).

A Q motif motif is present at residues 120–148 (LAVSRLGLPQKLVETLEKRGITKLFPIQR). Residues 151-234 (LVPALEGRDI…RTVCVYGGVS (84 aa)) enclose the Helicase ATP-binding domain. 164–171 (AKTGTGKT) serves as a coordination point for ATP.

It belongs to the DEAD box helicase family. DDX21/DDX50 subfamily.

The polypeptide is DEAD-box ATP-dependent RNA helicase 3 (Helianthus annuus (Common sunflower)).